The sequence spans 1938 residues: MSSDAEMAIFGEAAPYLRKPEKERIEAQNRPFDSKKACFVADNKEMYVKGMIQTRENDKVIVKTLDDRMLTLNNDQVFPMNPPKFDKIEDMAMMTHLHEPAVLYNLKERYAAWMIYTYSGLFCVTVNPYKWLPVYKPEVVAAYRGKKRQEAPPHIFSISDNAYQFMLTDRDNQSILITGESGAGKTVNTKRVIQYFATIAVTGDKKKETQPGKMQGTLEDQIIQANPLLEAFGNAKTVRNDNSSRFGKFIRIHFGATGKLASADIETYLLEKSRVTFQLSSERSYHIFYQIMSNKKPELIDLLLISTNPFDFPFVSQGEVTVASIDDSEELLATDNAIDILGFSSEEKVGIYKLTGAVMHYGNMKFKQKQREEQAEPDGTEVADKAGYLMGLNSAEMLKGLCCPRVKVGNEYVTKGQNVQQVTNSVGALAKAVYEKMFLWMVTRINQQLDTKQPRQYFIGVLDIAGFEIFDFNSLEQLCINFTNEKLQQFFNHHMFVLEQEEYKKEGIEWEFIDFGMDLAACIELIEKPMGIFSILEEECMFPKATDTSFKNKLYDQHLGKSNNFQKPKPAKGKAEAHFSLVHYAGTVDYNIAGWLDKNKDPLNETVVGLYQKSSLKLLSFLFSNYAGAETGDSGGSKKGGKKKGSSFQTVSAVFRENLNKLMTNLRSTHPHFVRCLIPNETKTPGVMDHYLVMHQLRCNGVLEGIRICRKGFPSRILYADFKQRYRILNASAIPEGQFIDSKNASEKLLNSIDVDREQFRFGNTKVFFKAGLLGLLEEMRDEKLVTLMTSTQAVCRGYLMRVEFKKMMERRDSIFCIQYNIRSFMNVKHWPWMNLFFKIKPLLKSAEAEKEMATMKEDFERTKEELARSEARRKELEEKMVSLLQEKNDLQLQVQSETENLMDAEERCEGLIKSKILLEAKVKELTERLEEEEEMNSELVAKKRNLEDKCSSLKRDIDDLELTLTKVEKEKHATENKVKNLSEEMTALEENISKLTKEKKSLQEAHQQTLDDLQVEEDKVNGLIKINAKLEQQTDDLEGSLEQEKKLRADLERAKRKLEGDLKMSQESIMDLENDKQQIEEKLKKKEFELSQLQAKIDDEQVHSLQFQKKIKELQARIEELEEEIEAEHTLRAKIEKQRSDLARELEEISERLEEASGATSAQIEMNKKREAEFQKMRRDLEEATLQHEATAATLRKKQADSVAELGEQIDNLQRVKQKLEKEKSELKMEIDDMASNIEALSKSKSNIERTCRTVEDQFSEIKAKDEQQTQLIHDLNMQKARLQTQNGELSHRVEEKESLISQLTKSKQALTQQLEELKRQMEEETKAKNAMAHALQSSRHDCDLLREQYEEEQEAKAELQRALSKANSEVAQWRTKYETDAIQRTEELEEAKKKLAQRLQEAEENTETANSKCASLEKTKQRLQGEVEDLMRDLERSHTACATLDKKQRNFDKVLAEWKQKLDESQAELEAAQKESRSLSTELFKMRNAYEEVVDQLETLRRENKNLQEEISDLTEQIAETGKNLQEAEKTKKLVEQEKSDLQVALEEVEGSLEHEESKILRVQLELSQVKSELDRKVIEKDEEIEQLKRNSQRAAEALQSVLDAEIRSRNDALRLKKKMEGDLNEMEIQLGHSNRQMAETQKHLRTVQGQLKDSQLHLDDALRSNEDLKEQLAIVERRNGLLLEELEEMKVALEQTERTRRLSEQELLDASDRVQLLHSQNTSLINTKKKLEADIAQCQAEVENSIQESRNAEEKAKKAITDAAMMAEELKKEQDTSAHLERMKKNLEQTVKDLQHRLDEAEQLALKGGKKQIQKLENRVRELENELDVEQKRGAEALKGAHKYERKVKEMTYQAEEDHKNILRLQDLVDKLQAKVKSYKRQAEEAEEQANTQLSRCRRVQHELEEAAERADIAESQVNKLRAKSRDVGSQKMEE.

The region spanning 33 to 82 (DSKKACFVADNKEMYVKGMIQTRENDKVIVKTLDDRMLTLNNDQVFPMNP) is the Myosin N-terminal SH3-like domain. The region spanning 86–782 (DKIEDMAMMT…LLGLLEEMRD (697 aa)) is the Myosin motor domain. Position 130 is an N6,N6,N6-trimethyllysine (K130). 179-186 (GESGAGKT) contributes to the ATP binding site. 2 actin-binding regions span residues 659–681 (LNKL…IPNE) and 761–775 (RFGN…GLLG). Residues 785–814 (LVTLMTSTQAVCRGYLMRVEFKKMMERRDS) form the IQ domain. Residues 843 to 1938 (LLKSAEAEKE…RDVGSQKMEE (1096 aa)) are a coiled coil. The tract at residues 1917–1938 (AESQVNKLRAKSRDVGSQKMEE) is disordered. Over residues 1927–1938 (KSRDVGSQKMEE) the composition is skewed to basic and acidic residues.

It belongs to the TRAFAC class myosin-kinesin ATPase superfamily. Myosin family. Muscle myosin is a hexameric protein that consists of 2 heavy chain subunits (MHC), 2 alkali light chain subunits (MLC) and 2 regulatory light chain subunits (MLC-2). In terms of tissue distribution, specifically expressed in extraocular and laryngeal muscles.

It localises to the cytoplasm. Its subcellular location is the myofibril. Its function is as follows. Fast twitching myosin mediating the high-velocity and low-tension contractions of specific striated muscles. This Homo sapiens (Human) protein is Myosin-13 (MYH13).